A 52-amino-acid chain; its full sequence is Large ribosomal subunit protein eL40 (52 aa).

4 residues coordinate Zn(2+): Cys-20, Cys-23, Cys-34, and Cys-39.

Belongs to the eukaryotic ribosomal protein eL40 family. As to quaternary structure, component of the large ribosomal subunit. Mature ribosomes consist of a small (40S) and a large (60S) subunit. The 40S subunit contains about 32 different proteins and 1 molecule of RNA (18S). The 60S subunit contains 45 different proteins and 3 molecules of RNA (25S, 5.8S and 5S). Zn(2+) serves as cofactor.

Its subcellular location is the cytoplasm. Functionally, component of the ribosome, a large ribonucleoprotein complex responsible for the synthesis of proteins in the cell. The small ribosomal subunit (SSU) binds messenger RNAs (mRNAs) and translates the encoded message by selecting cognate aminoacyl-transfer RNA (tRNA) molecules. The large subunit (LSU) contains the ribosomal catalytic site termed the peptidyl transferase center (PTC), which catalyzes the formation of peptide bonds, thereby polymerizing the amino acids delivered by tRNAs into a polypeptide chain. The nascent polypeptides leave the ribosome through a tunnel in the LSU and interact with protein factors that function in enzymatic processing, targeting, and the membrane insertion of nascent chains at the exit of the ribosomal tunnel. This chain is Large ribosomal subunit protein eL40, found in Candida albicans (strain SC5314 / ATCC MYA-2876) (Yeast).